A 719-amino-acid polypeptide reads, in one-letter code: Forkhead box protein K1 (719 aa).

A2 is modified (N-acetylalanine). Residues 2 to 40 are interaction with SIN3A and SIN3B; the sequence is AEVGEDSGARALLALRSAPCSPVLCAAAAAAAFPATTSP. The interval 35 to 67 is disordered; that stretch reads PATTSPPPPAQPPPGPPALPAEPGPGPVPSTVA. Positions 38–62 are enriched in pro residues; that stretch reads TSPPPPAQPPPGPPALPAEPGPGPV. The segment at 81 to 406 is required for interaction with FOXO4 and MEF2C; it reads AASVRQSPGP…PLSSRSAPAS (326 aa). S87 is modified (phosphoserine). Positions 109 to 161 constitute an FHA domain; the sequence is VTIGRNSSQGSVDLSMGLSSFISRRHLQLSFQEPHFYLRCLGKNGVFVDGAFQ. Residues R147 and R177 each carry the omega-N-methylarginine modification. Phosphoserine occurs at positions 199, 209, 225, and 229. T231 and T233 each carry phosphothreonine. Phosphoserine is present on residues S239, S243, S281, and S285. Positions 291-386 form a DNA-binding region, fork-head; it reads KPPYSYAQLI…EQAFRKRRQR (96 aa). The disordered stretch occupies residues 399-443; that stretch reads SSRSAPASPTHPGLMSPRSSGLQTPECLSREGSPIPHDPDLGSKL. A phosphoserine mark is found at S402 and S406. T408 carries the phosphothreonine modification. S414 is modified (phosphoserine). The residue at position 422 (T422) is a Phosphothreonine. Phosphoserine occurs at positions 427, 431, and 445. Low complexity predominate over residues 665–685; sequence AANAAPTPAASTTTSASSSGE. A disordered region spans residues 665–719; it reads AANAAPTPAASTTTSASSSGEPEVKRSRVEEPGGTATTQPTAMAATGPQGPGTGE. Residues 686 to 695 show a composition bias toward basic and acidic residues; the sequence is PEVKRSRVEE. Low complexity predominate over residues 696–712; the sequence is PGGTATTQPTAMAATGP.

As to quaternary structure, interacts with SIN3A and SIN3B (via PAH2) to form a complex which represses transcription. Component of SIN3A-, but not SIN3B-, containing multiprotein complexes. Interacts with FOXO4 and MEF2C; both interactions inhibit FOXO4 and MEF2C transactivation activity. Interacts (when phosphorylated) with YWHAE/14-3-3-epsilon; promotes sequestration in the cytoplasm and leads to impaired ability to bind DNA. Interacts with FHL2. Interacts with SRF. Interacts with DVL2 and DVL3; the interaction induces DVL2 nuclear translocation. Interacts with BAP1 (when phosphorylated). Accessory component of the polycomb repressive deubiquitinase (PR-DUB) complex, at least composed of BAP1, one of ASXL1, ASXL2 or (probably) ASXL3 and one of MBD5 or MBD6. The PR-DUB core associates with a number of accessory proteins, including FOXK1, FOXK2, KDM1B, HCFC1 and OGT. Post-translationally, phosphorylation by GSK3 (GSK3A or GSK3B) promotes interaction with YWHAE/14-3-3-epsilon and retention in the cytoplasm. In response to mTORC1 signaling, phosphorylation by GSK3 is prevented, leading to translocation to the nucleus. Expressed in tissues and cells in which the myoglobin gene is transcriptionally active including cardiac and skeletal myocytes, brain and kidney. In the adult brain, expressed in the piriform cortex and the indusium griseum. In the hippocampus, expression is localized to the dentate gyrus and CA3 area. In the cerebellum, expression is confined to the Purkinje cell layer. Present in neuroretinal cells: expressed in rod bipolar cells, amacrine cells and ganglion cells (at protein level).

The protein resides in the nucleus. It localises to the cytoplasm. In terms of biological role, transcriptional regulator involved in different processes such as glucose metabolism, aerobic glycolysis, muscle cell differentiation and autophagy. Recognizes and binds the forkhead DNA sequence motif (5'-GTAAACA-3') and can both act as a transcription activator or repressor, depending on the context. Together with FOXK2, acts as a key regulator of metabolic reprogramming towards aerobic glycolysis, a process in which glucose is converted to lactate in the presence of oxygen. Acts by promoting expression of enzymes for glycolysis (such as hexokinase-2 (HK2), phosphofructokinase, pyruvate kinase (PKLR) and lactate dehydrogenase), while suppressing further oxidation of pyruvate in the mitochondria by up-regulating pyruvate dehydrogenase kinases PDK1 and PDK4. Probably plays a role in gluconeogenesis during overnight fasting, when lactate from white adipose tissue and muscle is the main substrate. Involved in mTORC1-mediated metabolic reprogramming: in response to mTORC1 signaling, translocates into the nucleus and regulates the expression of genes associated with glycolysis and downstream anabolic pathways, such as HIF1A, thereby regulating glucose metabolism. Together with FOXK2, acts as a negative regulator of autophagy in skeletal muscle: in response to starvation, enters the nucleus, binds the promoters of autophagy genes and represses their expression, preventing proteolysis of skeletal muscle proteins. Acts as a transcriptional regulator of the myogenic progenitor cell population in skeletal muscle. Binds to the upstream enhancer region (CCAC box) of myoglobin (MB) gene, regulating the myogenic progenitor cell population. Promotes muscle progenitor cell proliferation by repressing the transcriptional activity of FOXO4, thereby inhibiting myogenic differentiation. Involved in remodeling processes of adult muscles that occur in response to physiological stimuli. Required to correct temporal orchestration of molecular and cellular events necessary for muscle repair. Represses myogenic differentiation by inhibiting MEFC activity. Positively regulates Wnt/beta-catenin signaling by translocating DVL into the nucleus. Reduces virus replication, probably by binding the interferon stimulated response element (ISRE) to promote antiviral gene expression. Accessory component of the polycomb repressive deubiquitinase (PR-DUB) complex; recruits the PR-DUB complex to specific FOXK1-bound genes. The chain is Forkhead box protein K1 from Mus musculus (Mouse).